Reading from the N-terminus, the 478-residue chain is Mannose-1-phosphate guanylyltransferase (478 aa).

This sequence belongs to the mannose-6-phosphate isomerase type 2 family.

The catalysed reaction is alpha-D-mannose 1-phosphate + GTP + H(+) = GDP-alpha-D-mannose + diphosphate. Its pathway is nucleotide-sugar biosynthesis; GDP-alpha-D-mannose biosynthesis; GDP-alpha-D-mannose from alpha-D-mannose 1-phosphate (GTP route): step 1/1. Its function is as follows. Involved in the biosynthesis of the capsular polysaccharide colanic acid. The sequence is that of Mannose-1-phosphate guanylyltransferase (manC) from Escherichia coli (strain K12).